A 1034-amino-acid chain; its full sequence is FERM domain-containing protein 4B (1034 aa).

One can recognise an FERM domain in the interval 59–361; it reads RHCQVHLLDD…SQHQFYLDRK (303 aa). Ser-372 carries the phosphoserine modification. Coiled coils occupy residues 417-450 and 531-561; these read EVSEEQKREKILELKKKEKLLQEKLLKKVEELKK and KKKRKQDYTDAMKKLQEIENAINEYRIRCGK. Residues 542–971 are necessary for adherens junction and tight junction localization; it reads MKKLQEIENA…TQLTIGLSDY (430 aa). The span at 576–589 shows a compositional bias: low complexity; it reads PSESSSLSDTTTYD. 4 disordered regions span residues 576–614, 635–698, 712–735, and 752–786; these read PSESSSLSDTTTYDDPSDAFTFPGQRSSSVPHSPRILPP, DTRQ…LESQ, FSLSKSQRSSSTEILDDGSSYTSQ, and TTQTLDTRTRGRRRSKKQNVSTSNSGSMPNLAQKD. The residue at position 608 (Ser-608) is a Phosphoserine. Composition is skewed to polar residues over residues 635–650 and 663–674; these read DTRQSREMLSTHSSPY and MPTTPVLTRNAY. Positions 675–685 are enriched in low complexity; the sequence is SSSHLEPESSS. Ser-697 is subject to Phosphoserine. A compositionally biased stretch (low complexity) spans 713 to 722; that stretch reads SLSKSQRSSS. Residues 769–781 are compositionally biased toward polar residues; sequence QNVSTSNSGSMPN. Lys-882 participates in a covalent cross-link: Glycyl lysine isopeptide (Lys-Gly) (interchain with G-Cter in SUMO2). Disordered regions lie at residues 905-925 and 1004-1034; these read RASGQKDQGHSPQTSFDSDRG and DGTDGNQLEDNLESSEQRLFWHEDSKPGTLV. A compositionally biased stretch (polar residues) spans 906 to 920; it reads ASGQKDQGHSPQTSF. Phosphoserine is present on Ser-915. Positions 1018-1034 are enriched in basic and acidic residues; that stretch reads SEQRLFWHEDSKPGTLV. Lys-1029 participates in a covalent cross-link: Glycyl lysine isopeptide (Lys-Gly) (interchain with G-Cter in SUMO2).

In terms of assembly, interacts with CYTH3. Interacts with PARD3. Interacts with CYTH1.

The protein localises to the cytoplasm. The protein resides in the cytoskeleton. It is found in the cell junction. It localises to the tight junction. Its subcellular location is the adherens junction. In terms of biological role, member of GRP1 signaling complexes that are acutely recruited to plasma membrane ruffles in response to insulin receptor signaling. May function as a scaffolding protein that regulates epithelial cell polarity by connecting ARF6 activation with the PAR3 complex. Plays a redundant role with FRMD4A in epithelial polarization. The protein is FERM domain-containing protein 4B of Homo sapiens (Human).